The chain runs to 596 residues: MGPADSWGHHWMGILLSASLCTVWSPPAAAQLTLNANPLDATQSEDVVLPVFGTPRTPQIHGRSRELAKPSIAVSPGTAIEQKDMVTFYCTTKDVNITIHWVSNNLSIVFHERMQLSKDGKILTILIVQREDSGTYQCEARDALLSQRSDPIFLDVKYGPDPVEIKLESGVASGEVVEVMEGSSMTFLAETKSHPPCAYTWFLLDSILSHTTRTFTIHAVSREHEGLYRCLVSNSATHLSSLGTLKVRVLETLTMPQVVPSSLNLVENARSVDLTCQTVNQSVNVQWFLSGQPLLPSEHLQLSADNRTLIIHGLQRNDTGPYACEVWNWGSRARSEPLELTINYGPDQVHITRESASEMISTIEAELNSSLTLQCWAESKPGAEYRWTLEHSTGEHLGEQLIIRALTWEHDGIYNCTASNSLTGLARSTSVLVKVVGPQSSSLSSGAIAGIVIGILAVIAVASELGYFLCIRNARRPSRKTTEDPSHETSQPIPKEEHPTEPSSESLSPEYRNISQLQGRIRVELMQPPDLPEETYETKLPSASRRGNSFSPWKPPPKPLMPPLRLVSTVPKNMESIYEELVNPEPNTYIQINPSV.

A signal peptide spans 1–30 (MGPADSWGHHWMGILLSASLCTVWSPPAAA). The Extracellular segment spans residues 31–450 (QLTLNANPLD…SSLSSGAIAG (420 aa)). 4 Ig-like C2-type domains span residues 58–154 (PQIH…PIFL), 160–246 (PDPV…GTLK), 256–341 (PQVV…LELT), and 346–432 (PDQV…TSVL). A disulfide bridge links cysteine 90 with cysteine 138. N-linked (GlcNAc...) asparagine glycosylation is found at asparagine 96 and asparagine 105. Cysteine 276 and cysteine 324 are disulfide-bonded. N-linked (GlcNAc...) asparagine glycans are attached at residues asparagine 280, asparagine 306, asparagine 317, asparagine 368, and asparagine 415. Cysteine 375 and cysteine 416 are disulfide-bonded. A helical membrane pass occupies residues 451-471 (IVIGILAVIAVASELGYFLCI). Over 472–585 (RNARRPSRKT…SIYEELVNPE (114 aa)) the chain is Cytoplasmic. Disordered stretches follow at residues 477–510 (PSRK…LSPE) and 527–563 (QPPD…LMPP). Low complexity predominate over residues 501–510 (EPSSESLSPE). Positions 553 to 562 (WKPPPKPLMP) are enriched in pro residues. A phosphotyrosine mark is found at tyrosine 578 and tyrosine 589.

It belongs to the immunoglobulin superfamily. CEA family. As to quaternary structure, interacts (via extracellular domain) with PTPRH (via extracellular domain); the interaction dephosphorylates CEACAM20. Interacts (phosphorylated form) with SYK (via SH2 domains); the interaction further enhances CEACAM20 phosphorylation. Post-translationally, phosphorylated on tyrosine residues by SYK, SRC and FYN in vitro.

Its subcellular location is the cell projection. The protein localises to the microvillus membrane. It localises to the apical cell membrane. In terms of biological role, together with the tyrosine-protein kinase SYK, enhances production of the cytokine CXCL8/IL-8 via the NFKB pathway and may thus have a role in the intestinal immune response. The protein is Cell adhesion molecule CEACAM20 of Homo sapiens (Human).